Here is an 81-residue protein sequence, read N- to C-terminus: Antitoxin VapB28 (81 aa).

Its function is as follows. Antitoxin component of a type II toxin-antitoxin (TA) system. The polypeptide is Antitoxin VapB28 (vapB28) (Mycobacterium tuberculosis (strain CDC 1551 / Oshkosh)).